A 316-amino-acid polypeptide reads, in one-letter code: RING finger protein 148 (316 aa).

Residues 1–12 (MLLCVSCLSVNG) form the signal peptide. Asn-56 is a glycosylation site (N-linked (GlcNAc...) asparagine). Positions 84–178 (VSGAVVLPEG…GNLKGMELLH (95 aa)) constitute a PA domain. Helical transmembrane passes span 173–193 (GMEL…IEVG) and 204–224 (VMSL…YCAW). An RING-type; atypical zinc finger spans residues 269–310 (CVVCFDMYKAQDVIRILTCKHFFHKTCIDPWLLAHRTCPMCK).

The protein resides in the membrane. The chain is RING finger protein 148 (Rnf148) from Mus musculus (Mouse).